Consider the following 502-residue polypeptide: MLKEFKEQRLNEIQELRSMGIEPYPYKFEKELTAREIREKYDYLQAGEVLESEKLSFAGRVMSIRHHGKTAFFHMKDDTGRIQAYVRADSVGKEKMDLFKRHVKIGDFIGVRGFPFKSKTGELTIYVQEYTLLSKALRPLPEKWHGIKDKEIIYRQRYLELIVSDEAIERFRKRFKAVQVIREFLNSRGFIEVETPILHYVTGGAEARPFVTHLNVFDIDMYLRIAPELYLKRLIIGGFEKIYEIGKNFRNEGISYKHSPEFTSIEIYQAYADYNDMMDLTEELIVEVVKRTCGTLKISYQGKEIDFTPPWKRVRMRDFLKEKLGVDILEDPDEVLLKKLEEYGVELEIKNRAHLIDKLRDLVEEELVNPTFIIDHPVVISPLAKRHREDPRLTERFELIIFGREIANAFSELNDPVDQYQRFLEQAKMREEGDEEAHMMDLDFVRALEYGMPPTGGLGIGLDRLFMFITDSPTIRDVIPFPIVKPKKFEEEEAEFEGGFEE.

The Mg(2+) site is built by E398 and E405.

It belongs to the class-II aminoacyl-tRNA synthetase family. In terms of assembly, homodimer. The cofactor is Mg(2+).

It is found in the cytoplasm. The enzyme catalyses tRNA(Lys) + L-lysine + ATP = L-lysyl-tRNA(Lys) + AMP + diphosphate. The polypeptide is Lysine--tRNA ligase (Thermotoga sp. (strain RQ2)).